Reading from the N-terminus, the 93-residue chain is Small ribosomal subunit protein bS6 (93 aa).

It belongs to the bacterial ribosomal protein bS6 family.

Its function is as follows. Binds together with bS18 to 16S ribosomal RNA. This chain is Small ribosomal subunit protein bS6 (rpsF), found in Treponema pallidum (strain Nichols).